We begin with the raw amino-acid sequence, 83 residues long: Turripeptide Lol11.1 (83 aa).

The N-terminal stretch at 1 to 27 (MARQMMTVGCLILIVVLLDMMVPVFNT) is a signal peptide.

Belongs to the conopeptide I2-like superfamily. In terms of processing, contains 4 disulfide bonds. Expressed by the venom duct.

The protein resides in the secreted. Functionally, acts as a neurotoxin by inhibiting voltage-gated potassium channels (Kv). In Iotyrris olangoensis (Sea snail), this protein is Turripeptide Lol11.1.